Consider the following 358-residue polypeptide: DNA polymerase IV (358 aa).

Residues 4–185 enclose the UmuC domain; the sequence is IIHIDMDCYF…LSLRKIPGVG (182 aa). Mg(2+) is bound by residues Asp8 and Asp103. Residue Glu104 is part of the active site.

It belongs to the DNA polymerase type-Y family. As to quaternary structure, monomer. Requires Mg(2+) as cofactor.

It localises to the cytoplasm. It carries out the reaction DNA(n) + a 2'-deoxyribonucleoside 5'-triphosphate = DNA(n+1) + diphosphate. Functionally, poorly processive, error-prone DNA polymerase involved in untargeted mutagenesis. Copies undamaged DNA at stalled replication forks, which arise in vivo from mismatched or misaligned primer ends. These misaligned primers can be extended by PolIV. Exhibits no 3'-5' exonuclease (proofreading) activity. May be involved in translesional synthesis, in conjunction with the beta clamp from PolIII. The chain is DNA polymerase IV from Shewanella baltica (strain OS155 / ATCC BAA-1091).